We begin with the raw amino-acid sequence, 61 residues long: Small ribosomal subunit protein uS14 (61 aa).

Zn(2+) is bound by residues C24, C27, C40, and C43.

It belongs to the universal ribosomal protein uS14 family. Zinc-binding uS14 subfamily. As to quaternary structure, part of the 30S ribosomal subunit. Contacts proteins S3 and S10. The cofactor is Zn(2+).

Its function is as follows. Binds 16S rRNA, required for the assembly of 30S particles and may also be responsible for determining the conformation of the 16S rRNA at the A site. This chain is Small ribosomal subunit protein uS14, found in Campylobacter jejuni subsp. jejuni serotype O:6 (strain 81116 / NCTC 11828).